Here is a 270-residue protein sequence, read N- to C-terminus: Glucosamine-6-phosphate deaminase (270 aa).

Catalysis depends on Asp-68, which acts as the Proton acceptor; for enolization step. Asp-145 acts as the For ring-opening step in catalysis. His-147 (proton acceptor; for ring-opening step) is an active-site residue. The active-site For ring-opening step is the Glu-152.

It belongs to the glucosamine/galactosamine-6-phosphate isomerase family. NagB subfamily.

It catalyses the reaction alpha-D-glucosamine 6-phosphate + H2O = beta-D-fructose 6-phosphate + NH4(+). It functions in the pathway amino-sugar metabolism; N-acetylneuraminate degradation; D-fructose 6-phosphate from N-acetylneuraminate: step 5/5. In terms of biological role, catalyzes the reversible isomerization-deamination of glucosamine 6-phosphate (GlcN6P) to form fructose 6-phosphate (Fru6P) and ammonium ion. This Bifidobacterium longum (strain DJO10A) protein is Glucosamine-6-phosphate deaminase.